Here is a 347-residue protein sequence, read N- to C-terminus: Dihydroorotate dehydrogenase (quinone) (347 aa).

Residues 62–66 (AGLDK) and Ala-86 contribute to the FMN site. Lys-66 lines the substrate pocket. Substrate is bound at residue 111 to 115 (NRMGF). FMN contacts are provided by Asn-139 and Asn-172. Asn-172 is a substrate binding site. Ser-175 acts as the Nucleophile in catalysis. Asn-177 provides a ligand contact to substrate. Residues Lys-217 and Thr-245 each contribute to the FMN site. 246–247 (NT) serves as a coordination point for substrate. Residues Gly-268, Gly-297, and 318–319 (YT) each bind FMN.

Belongs to the dihydroorotate dehydrogenase family. Type 2 subfamily. In terms of assembly, monomer. Requires FMN as cofactor.

It is found in the cell membrane. It carries out the reaction (S)-dihydroorotate + a quinone = orotate + a quinol. The protein operates within pyrimidine metabolism; UMP biosynthesis via de novo pathway; orotate from (S)-dihydroorotate (quinone route): step 1/1. Its function is as follows. Catalyzes the conversion of dihydroorotate to orotate with quinone as electron acceptor. The chain is Dihydroorotate dehydrogenase (quinone) from Coxiella burnetii (strain CbuK_Q154) (Coxiella burnetii (strain Q154)).